Reading from the N-terminus, the 91-residue chain is Small ribosomal subunit protein bS20 (91 aa).

Over residues 1–21 (MPLHKSAEKRLRQSARRNERN) the composition is skewed to basic and acidic residues. 2 disordered regions span residues 1–25 (MPLHKSAEKRLRQSARRNERNRARK) and 71–91 (NKASRKKSQLSRMLNAYAQKD).

The protein belongs to the bacterial ribosomal protein bS20 family.

Functionally, binds directly to 16S ribosomal RNA. In Prosthecochloris aestuarii (strain DSM 271 / SK 413), this protein is Small ribosomal subunit protein bS20.